Here is a 556-residue protein sequence, read N- to C-terminus: Arginine--tRNA ligase (556 aa).

Positions 132-142 (ANPTGDLHLGH) match the 'HIGH' region motif.

This sequence belongs to the class-I aminoacyl-tRNA synthetase family. In terms of assembly, monomer.

The protein localises to the cytoplasm. The enzyme catalyses tRNA(Arg) + L-arginine + ATP = L-arginyl-tRNA(Arg) + AMP + diphosphate. The sequence is that of Arginine--tRNA ligase from Listeria monocytogenes serotype 4b (strain F2365).